Here is a 180-residue protein sequence, read N- to C-terminus: Stathmin-3 (180 aa).

S-palmitoyl cysteine attachment occurs at residues cysteine 22 and cysteine 24. In terms of domain architecture, SLD spans 38-180 (GDMEVKQLDK…NKEQREEMSG (143 aa)). Residues serine 50, serine 60, serine 65, serine 68, serine 72, serine 73, and serine 81 each carry the phosphoserine modification. The segment at 58 to 82 (LKSPSDLSPESPMLSSPPKRKDTSL) is disordered. The span at 60–74 (SPSDLSPESPMLSSP) shows a compositional bias: low complexity. Residues 76 to 179 (KRKDTSLEEL…RNKEQREEMS (104 aa)) adopt a coiled-coil conformation.

Belongs to the stathmin family. Interacts with STAT3. Interacts with CLU (secreted form); this interaction may act as an important modulator during neuronal differentiation. Post-translationally, N-terminal palmitoylation promotes specific anchoring to the cytosolic leaflet of Golgi membranes and subsequent vesicular trafficking along dendrites and axons. Neuronal Stathmins are substrates for palmitoyltransferases ZDHHC3, ZDHHC7 and ZDHHC15.

Its subcellular location is the golgi apparatus. The protein localises to the cell projection. It localises to the growth cone. It is found in the axon. The protein resides in the cytoplasm. Its subcellular location is the cytosol. Functionally, exhibits microtubule-destabilizing activity, which is antagonized by STAT3. The protein is Stathmin-3 (STMN3) of Bos taurus (Bovine).